A 1427-amino-acid polypeptide reads, in one-letter code: MNDLTKFTNQIAKPETFDQIQIGLASPERIRSWSFGEIKKPETINYRTFKPERDGLFCARIFGPVKDYECLCGKYKRMKYKGVVCEKCGVEVTVTKVRRERMGHIELAAPVAHIWFLKSLPSRIGLLLDMQLKQLERILYFESYVVIEPGLTPLEKYQLLTEDELLDAQDEYGEDAFSAGIGAEAVKHMLMNLDLVQEKEDLLQELATTKSELKPKKIIKRLKVVESFIDSGNRPEWMILDVVPVIPPELRPLVPLDGGRFATSDLNDLYRRVINRNNRLKRLIELRAPDIIVRNEKRMLQEAVDALFDNGRRGRVITGANKRPLKSLSDMLKGKQGRFRQNLLGKRVDYSGRSVIVTGPELKLHQCGLPKKMALELFKPFIYARLDAKGLSMTLKQAKKWVEKERKEVWDILDEVIREHPVMLNRAPTLHRLGIQAFEPVLIEGKAIQLHPLVCSAFNADFDGDQMAVHVPLSLEAQLEARVLMMSTNNILSPANGKPIIVPSQDMVLGIYYLSMDRAGEPGEGMMLADMAEVHQALEAKAVTLHSKIVARVPQTDEDGNQYLKRFETTPGRMLIGECLPKSHKVPFEIVNRLLTKKEIGDVIDQVYRHTGQKDTVLFADAIMALGFRHAFKAGISFGKDDMIIPDSKDALVAETKELVADYEQQYQDGLITQQEKYNKVIDAWSRCGDQVANAMMEELKSSPIDPETGRQKPINAIYMMSHSGARGSPAQMKQLAGMRGLMAKPSGEIIETPIISNFKEGLTVLEYFNSTHGARKGLADTALKTANSGYLTRRLVDVSQDCVVIEEDCGTERALEMRAIVQGGSTIASLGERILGRTLAEDLIEAKSGEVIAQKGELLDEAAIAKIEAAGVQSARIRSPLVCEATQGVCGKCYGRDLARGTPVNIGEAVGVIAAQSIGEPGTQLTMRTFHIGGAAQVNEQSHLEAISDGTVQYRDIPTITDKRGRRLSLARNGEIVVIDTEGRERAIHRVPYGTHLLHENGAIISQGDRLAEWDPFTTPVITEKPGIVRYQDLVDGKTLTEQTDEATGMSSRVVTENRAAGRGKKEDLRPRLTLLDENSGEAARYMMAPGTTLSVEDGQQVEAGDILARASREAAKTRDITGGLPRVAELFEARKPKDNSIIAKIAGRIEFVRDYKAKRKIAIIPEEGEPVEYLVPKSRVIDVQEGDYVKKGDNLISGSPDPHDILEVMGVEALAEYLVAEIQEVYRLQGVKINDKHIEVIVRQMLQKVEITNGGDTTLLPGEQVDLEEMLETNGKLEEGQQPAEGKPVLLGITKASLQTRSFISAASFQETTRVLTQAAVEGKKDSLIGLKENVIVGRLIPAGTGAGMNRMRVAASSRDAALRASYRKLQESLIAPATAAEEHAAELAQGPEAAIGDDPLATVEGETHGTDADAGDYLIEGDEA.

Zn(2+)-binding residues include Cys-70, Cys-72, Cys-85, and Cys-88. Residues Asp-461, Asp-463, and Asp-465 each contribute to the Mg(2+) site. Zn(2+) contacts are provided by Cys-810, Cys-884, Cys-891, and Cys-894. Disordered regions lie at residues 1044 to 1065 and 1394 to 1427; these read QTDEATGMSSRVVTENRAAGRG and PEAAIGDDPLATVEGETHGTDADAGDYLIEGDEA.

Belongs to the RNA polymerase beta' chain family. The RNAP catalytic core consists of 2 alpha, 1 beta, 1 beta' and 1 omega subunit. When a sigma factor is associated with the core the holoenzyme is formed, which can initiate transcription. The cofactor is Mg(2+). Zn(2+) is required as a cofactor.

It catalyses the reaction RNA(n) + a ribonucleoside 5'-triphosphate = RNA(n+1) + diphosphate. Functionally, DNA-dependent RNA polymerase catalyzes the transcription of DNA into RNA using the four ribonucleoside triphosphates as substrates. The protein is DNA-directed RNA polymerase subunit beta' of Novosphingobium aromaticivorans (strain ATCC 700278 / DSM 12444 / CCUG 56034 / CIP 105152 / NBRC 16084 / F199).